We begin with the raw amino-acid sequence, 325 residues long: Centromere protein O (325 aa).

The segment at 1–35 (MEEERNSDEKENALCGRSLTAASRDGGGRMPAAPL) is disordered. A coiled-coil region spans residues 55-112 (LEMLEAQAHELGLKQEEKEQQEKKLDRLKARVQELRARRDELRAKVELQEKRLLDKEG).

The protein belongs to the CENP-O/MCM21 family. Component of the CENPA-HI complex, at least composed of CENPH, CENPI, CENPK, CENPL, CENPM, CENPO and CENPP. Component of a discrete complex composed of at least CENPO, CENPP, CENPQ, CENPR and CENPU.

Its subcellular location is the nucleus. It localises to the chromosome. The protein localises to the centromere. Functionally, component of the CENPA-HI complex, a centromeric complex involved in assembly of kinetochore proteins, mitotic progression and chromosome segregation. Involved in kinetochore assembly and required for recovery from spindle damage. This chain is Centromere protein O (CENPO), found in Gallus gallus (Chicken).